A 435-amino-acid chain; its full sequence is MKPLVALVGRPNVGKSTLFNRLSRSKSAITDSTPGVTRDRHIASAEWQGRKFMVMDTGGYCHDKDSLNRAMMEQTLAAIAEADVILFMVDVRSGLAYLDLDMSRMLKKNFRDKPVYLVVNKVETRQLAFEGEEFRRTGLTEPWFISAREGNGVADLLDEVVASFPDETTEEEDTAIKLAIIGRPNVGKSSFVNALLGTNRHIVSDIPGTTRDAIDSRLKRNGKEVLLIDTAGLRKRTKIDRGIEFYSSVRTDKSIERCDVALLLIDAEQGLEKQDIKIIQMAAEKRKGIVILVNKWDLIEKETNTSKQYSDRIYDQIGNLSWIPVLFISALTKKNLYRAIDTALETGQNRQKKISTSELNRFLQQVLSELPPSTKSGRELKIKYVTQIGAHYPVFAFFCNNPDLVLSNYKRFLEKRLRQTFDFTGVPVSFRYRKK.

EngA-type G domains follow at residues 3–168 and 176–351; these read PLVA…PDET and IKLA…QNRQ. Residues 9–16, 56–60, 120–123, 182–189, 229–233, and 294–297 contribute to the GTP site; these read GRPNVGKS, DTGGY, NKVE, DTAGL, and NKWD. Residues 352 to 435 enclose the KH-like domain; the sequence is KKISTSELNR…VPVSFRYRKK (84 aa).

The protein belongs to the TRAFAC class TrmE-Era-EngA-EngB-Septin-like GTPase superfamily. EngA (Der) GTPase family. In terms of assembly, associates with the 50S ribosomal subunit.

GTPase that plays an essential role in the late steps of ribosome biogenesis. The protein is GTPase Der of Chlorobium phaeobacteroides (strain BS1).